The sequence spans 81 residues: Small cysteine-rich protein 4 (81 aa).

An N-terminal signal peptide occupies residues 1-23 (MDTKVACLLLIILGALTVQGAVS). A propeptide spanning residues 24–25 (GN) is cleaved from the precursor.

The protein belongs to the Cnidaria small cysteine-rich protein (SCRiP) family. beta subfamily. Post-translationally, contains 4 disulfide bonds.

It localises to the secreted. Its subcellular location is the nematocyst. In terms of biological role, induces neurotoxic symptoms on zebrafish. Has also been claimed to be implied in calcification, but tests on homolog proteins suggest that proteins of this family have a neurotoxic function and not a calcification function. This Orbicella faveolata (Mountainous star coral) protein is Small cysteine-rich protein 4.